The following is a 435-amino-acid chain: Trigger factor (435 aa).

A PPIase FKBP-type domain is found at 161-246; it reads GDKLTLDFTG…IHKTEGPILP (86 aa).

Belongs to the FKBP-type PPIase family. Tig subfamily.

It is found in the cytoplasm. It carries out the reaction [protein]-peptidylproline (omega=180) = [protein]-peptidylproline (omega=0). In terms of biological role, involved in protein export. Acts as a chaperone by maintaining the newly synthesized protein in an open conformation. Functions as a peptidyl-prolyl cis-trans isomerase. In Colwellia psychrerythraea (strain 34H / ATCC BAA-681) (Vibrio psychroerythus), this protein is Trigger factor.